We begin with the raw amino-acid sequence, 159 residues long: NADH-quinone oxidoreductase subunit B (159 aa).

4 residues coordinate [4Fe-4S] cluster: Cys-36, Cys-37, Cys-102, and Cys-132.

It belongs to the complex I 20 kDa subunit family. In terms of assembly, NDH-1 is composed of 14 different subunits. Subunits NuoB, C, D, E, F, and G constitute the peripheral sector of the complex. It depends on [4Fe-4S] cluster as a cofactor.

It localises to the cell inner membrane. It carries out the reaction a quinone + NADH + 5 H(+)(in) = a quinol + NAD(+) + 4 H(+)(out). Functionally, NDH-1 shuttles electrons from NADH, via FMN and iron-sulfur (Fe-S) centers, to quinones in the respiratory chain. Couples the redox reaction to proton translocation (for every two electrons transferred, four hydrogen ions are translocated across the cytoplasmic membrane), and thus conserves the redox energy in a proton gradient. The polypeptide is NADH-quinone oxidoreductase subunit B (Verminephrobacter eiseniae (strain EF01-2)).